A 194-amino-acid chain; its full sequence is NADH-quinone oxidoreductase subunit B (194 aa).

Residues Cys73, Cys74, Cys138, and Cys168 each coordinate [4Fe-4S] cluster.

This sequence belongs to the complex I 20 kDa subunit family. As to quaternary structure, NDH-1 is composed of 14 different subunits. Subunits NuoB, C, D, E, F, and G constitute the peripheral sector of the complex. [4Fe-4S] cluster is required as a cofactor.

Its subcellular location is the cell inner membrane. It carries out the reaction a quinone + NADH + 5 H(+)(in) = a quinol + NAD(+) + 4 H(+)(out). Functionally, NDH-1 shuttles electrons from NADH, via FMN and iron-sulfur (Fe-S) centers, to quinones in the respiratory chain. The immediate electron acceptor for the enzyme in this species is believed to be ubiquinone. Couples the redox reaction to proton translocation (for every two electrons transferred, four hydrogen ions are translocated across the cytoplasmic membrane), and thus conserves the redox energy in a proton gradient. The chain is NADH-quinone oxidoreductase subunit B from Rhizobium leguminosarum bv. trifolii (strain WSM2304).